Here is a 170-residue protein sequence, read N- to C-terminus: Crossover junction endodeoxyribonuclease RuvC (170 aa).

Active-site residues include Asp-9, Glu-70, and Asp-145. Residues Asp-9, Glu-70, and Asp-145 each contribute to the Mg(2+) site.

Belongs to the RuvC family. In terms of assembly, homodimer which binds Holliday junction (HJ) DNA. The HJ becomes 2-fold symmetrical on binding to RuvC with unstacked arms; it has a different conformation from HJ DNA in complex with RuvA. In the full resolvosome a probable DNA-RuvA(4)-RuvB(12)-RuvC(2) complex forms which resolves the HJ. The cofactor is Mg(2+).

The protein resides in the cytoplasm. The catalysed reaction is Endonucleolytic cleavage at a junction such as a reciprocal single-stranded crossover between two homologous DNA duplexes (Holliday junction).. Its function is as follows. The RuvA-RuvB-RuvC complex processes Holliday junction (HJ) DNA during genetic recombination and DNA repair. Endonuclease that resolves HJ intermediates. Cleaves cruciform DNA by making single-stranded nicks across the HJ at symmetrical positions within the homologous arms, yielding a 5'-phosphate and a 3'-hydroxyl group; requires a central core of homology in the junction. The consensus cleavage sequence is 5'-(A/T)TT(C/G)-3'. Cleavage occurs on the 3'-side of the TT dinucleotide at the point of strand exchange. HJ branch migration catalyzed by RuvA-RuvB allows RuvC to scan DNA until it finds its consensus sequence, where it cleaves and resolves the cruciform DNA. This Chlamydia trachomatis serovar A (strain ATCC VR-571B / DSM 19440 / HAR-13) protein is Crossover junction endodeoxyribonuclease RuvC.